A 266-amino-acid chain; its full sequence is Leucine-rich repeat-containing protein 3 (266 aa).

An N-terminal signal peptide occupies residues 1-38; sequence MTFPAGAYVLRKVFIPHGCPLIFRLLLAVICLSVPSFA. Positions 39-70 constitute an LRRNT domain; that stretch reads CPKSCHCSERNSLTVVQCSSRNLEEIPPDLPH. 3 LRR repeats span residues 71-92, 95-116, and 120-141; these read DTVS…AFKN, WLQE…AFKG, and SLRT…AFAR. Positions 151–204 constitute an LRRCT domain; that stretch reads NPWHCECTLQEVLRELRLDPETVNEVSCHTSDQEKYAGKPVIQVLDSGINFCNF. Residues 211–231 form a helical membrane-spanning segment; sequence VAMFVTMFGWFTMVIAYVIYY.

This sequence belongs to the LRRC3 family.

Its subcellular location is the membrane. In Danio rerio (Zebrafish), this protein is Leucine-rich repeat-containing protein 3 (lrrc3).